A 151-amino-acid polypeptide reads, in one-letter code: Small ribosomal subunit protein uS15 (151 aa).

The interval 1–20 (MARLHSGKRGSSGSTKPLRT) is disordered.

Belongs to the universal ribosomal protein uS15 family. In terms of assembly, part of the 30S ribosomal subunit.

The polypeptide is Small ribosomal subunit protein uS15 (Methanococcus vannielii (strain ATCC 35089 / DSM 1224 / JCM 13029 / OCM 148 / SB)).